The following is a 146-amino-acid chain: Small ribosomal subunit protein uS13A (146 aa).

Ser2 is modified (N-acetylserine). A Glycyl lysine isopeptide (Lys-Gly) (interchain with G-Cter in ubiquitin) cross-link involves residue Lys36. Residue Lys48 is modified to N6-methyllysine; by RKM1. Glycyl lysine isopeptide (Lys-Gly) (interchain with G-Cter in ubiquitin) cross-links involve residues Lys49, Lys80, and Lys96.

Belongs to the universal ribosomal protein uS13 family. In terms of assembly, component of the small ribosomal subunit (SSU). Mature yeast ribosomes consist of a small (40S) and a large (60S) subunit. The 40S small subunit contains 1 molecule of ribosomal RNA (18S rRNA) and 33 different proteins (encoded by 57 genes). The large 60S subunit contains 3 rRNA molecules (25S, 5.8S and 5S rRNA) and 46 different proteins (encoded by 81 genes). N-terminally acetylated by acetyltransferase NatA.

The protein resides in the cytoplasm. Functionally, component of the ribosome, a large ribonucleoprotein complex responsible for the synthesis of proteins in the cell. The small ribosomal subunit (SSU) binds messenger RNAs (mRNAs) and translates the encoded message by selecting cognate aminoacyl-transfer RNA (tRNA) molecules. The large subunit (LSU) contains the ribosomal catalytic site termed the peptidyl transferase center (PTC), which catalyzes the formation of peptide bonds, thereby polymerizing the amino acids delivered by tRNAs into a polypeptide chain. The nascent polypeptides leave the ribosome through a tunnel in the LSU and interact with protein factors that function in enzymatic processing, targeting, and the membrane insertion of nascent chains at the exit of the ribosomal tunnel. This Saccharomyces cerevisiae (strain ATCC 204508 / S288c) (Baker's yeast) protein is Small ribosomal subunit protein uS13A.